Consider the following 207-residue polypeptide: MLEVKNLTAIRDERILFESLSFEIHAGELVQIEGRNGTGKTTLLRIIAGLGECECGEILWQRSKIQSDRESYHQDLLFLGHQTGIKRELTALENLRFYLAVHQQTVDDPAIFEALAKVGLAGREDVPVAQLSAGQQRRVALARLWLSKKPLWILDEPLTAIDKQGVSVLEALFLSHAQQGGIVILTTHQDMFADNPKLRKIRLGDPK.

The ABC transporter domain occupies 2–204 (LEVKNLTAIR…NPKLRKIRLG (203 aa)). 34-41 (GRNGTGKT) provides a ligand contact to ATP.

This sequence belongs to the ABC transporter superfamily. CcmA exporter (TC 3.A.1.107) family. The complex is composed of two ATP-binding proteins (CcmA) and two transmembrane proteins (CcmB).

The protein resides in the cell inner membrane. The catalysed reaction is heme b(in) + ATP + H2O = heme b(out) + ADP + phosphate + H(+). Part of the ABC transporter complex CcmAB involved in the biogenesis of c-type cytochromes; once thought to export heme, this seems not to be the case, but its exact role is uncertain. Responsible for energy coupling to the transport system. The sequence is that of Cytochrome c biogenesis ATP-binding export protein CcmA from Vibrio cholerae serotype O1 (strain ATCC 39315 / El Tor Inaba N16961).